The primary structure comprises 122 residues: Small ribosomal subunit protein uS13 (122 aa).

The segment at 95 to 122 (GLPVHGQRTHTNARTRKGPRRGAVGKKK) is disordered.

The protein belongs to the universal ribosomal protein uS13 family. In terms of assembly, part of the 30S ribosomal subunit. Forms a loose heterodimer with protein S19. Forms two bridges to the 50S subunit in the 70S ribosome.

Functionally, located at the top of the head of the 30S subunit, it contacts several helices of the 16S rRNA. In the 70S ribosome it contacts the 23S rRNA (bridge B1a) and protein L5 of the 50S subunit (bridge B1b), connecting the 2 subunits; these bridges are implicated in subunit movement. Contacts the tRNAs in the A and P-sites. The polypeptide is Small ribosomal subunit protein uS13 (Desulfovibrio desulfuricans (strain ATCC 27774 / DSM 6949 / MB)).